Reading from the N-terminus, the 85-residue chain is Large ribosomal subunit protein bL27 (85 aa).

The protein belongs to the bacterial ribosomal protein bL27 family.

The protein is Large ribosomal subunit protein bL27 of Ruthia magnifica subsp. Calyptogena magnifica.